A 114-amino-acid chain; its full sequence is Probable acid stress chaperone HdeA (114 aa).

An N-terminal signal peptide occupies residues Met-1–Ala-26. Cys-46 and Cys-94 are oxidised to a cystine.

Belongs to the HdeA family.

It is found in the periplasm. Functionally, required for optimal acid stress protection. Exhibits a chaperone-like activity only at low pH by suppressing non-specifically the aggregation of denaturated periplasmic proteins. Contributes to acid resistance. Not required for wild-type virulence in the BALB/c mouse model. The sequence is that of Probable acid stress chaperone HdeA from Brucella abortus (strain 2308).